The chain runs to 208 residues: Dual specificity protein phosphatase 22-A (208 aa).

Residues 4–144 (GMNKVIDGLY…LQEFQMKQVS (141 aa)) form the Tyrosine-protein phosphatase domain. The active-site Phosphocysteine intermediate is the Cys88.

The protein belongs to the protein-tyrosine phosphatase family. Non-receptor class dual specificity subfamily.

The protein localises to the cytoplasm. It localises to the nucleus. The catalysed reaction is O-phospho-L-tyrosyl-[protein] + H2O = L-tyrosyl-[protein] + phosphate. It catalyses the reaction O-phospho-L-seryl-[protein] + H2O = L-seryl-[protein] + phosphate. It carries out the reaction O-phospho-L-threonyl-[protein] + H2O = L-threonyl-[protein] + phosphate. Its function is as follows. Activates the Jnk signaling pathway. Dephosphorylates and deactivates p38 and stress-activated protein kinase/c-Jun N-terminal kinase (SAPK/JNK). In Danio rerio (Zebrafish), this protein is Dual specificity protein phosphatase 22-A.